Here is a 256-residue protein sequence, read N- to C-terminus: MRSRWIWRFLRPDGGGIRWTSTPHGRLSPALRRGFLTTTTKSDYDRRPVDITPLEQRKLTFDTHALVQDLETHGFDKTQAQTIVSVLSTLSNVSLDTIYKEMVTKAQQEITVQQLMAHLDSIRKDMVILEKSEFANLRAENEKMKIELDQVKQQLTNETSRIRADNKLDINLERSRVTDMFTDQEKQLIEATNEFAKKDTQTKSIISETSNKIDTEIASLKTLMESSKLETIRYLAASVFTCLAIALGFYRFWKEN.

A mitochondrion-targeting transit peptide spans Met1 to Ser42. Residues Leu129–Lys167 are a coiled coil. Residues Thr231–Trp253 form a helical membrane-spanning segment.

The protein belongs to the CCDC90 family. Interacts with MCU.

Its subcellular location is the mitochondrion membrane. The polypeptide is Coiled-coil domain-containing protein 90B, mitochondrial (Ccdc90b) (Mus musculus (Mouse)).